The following is a 274-amino-acid chain: Large ribosomal subunit protein uL2cz/uL2cy (274 aa).

The segment at Asn224–Lys274 is disordered.

It belongs to the universal ribosomal protein uL2 family. In terms of assembly, part of the 50S ribosomal subunit.

It localises to the plastid. Its subcellular location is the chloroplast. This is Large ribosomal subunit protein uL2cz/uL2cy (rpl2-A) from Panax ginseng (Korean ginseng).